The chain runs to 833 residues: Piwi-like protein 2 (833 aa).

The region spanning 227–353 is the PAZ domain; it reads RINRVLNDNS…IPGELCFLCG (127 aa). Residues 313–338 are disordered; it reads PMRRERKKKDEEGVEKEKEKEAPEEK. Over residues 320–338 the composition is skewed to basic and acidic residues; the sequence is KKDEEGVEKEKEKEAPEEK. The Piwi domain occupies 515–815; that stretch reads KMALVFVPDD…LAELVGKVHK (301 aa).

The protein belongs to the argonaute family. Piwi subfamily. In terms of tissue distribution, expressed in dividing adult stem cells.

Required for the production of functional progeny from adult somatic stem cells (neoblasts). The polypeptide is Piwi-like protein 2 (wi-2) (Schmidtea mediterranea (Freshwater planarian flatworm)).